The primary structure comprises 353 residues: Inactive metacaspase-4 (353 aa).

The N-myristoyl glycine moiety is linked to residue Gly-2.

Belongs to the peptidase C14B family. Palmitoylated. In terms of processing, proteolytic cleavage by MCA3 occurs prior or during secretion and requires MCA4 membrane localization. Cleavage is dispensable for secretion and parasite growth and virulence in the mammalian host. In vitro, can be cleaved by MCA2 but specifically cleaved by MCA3 in vivo.

It localises to the cell projection. Its subcellular location is the cilium. The protein resides in the flagellum membrane. The protein localises to the secreted. Inactive metacaspase which plays a role in parasite bloodstream form growth and in parasite virulence within the mammalian host. The sequence is that of Inactive metacaspase-4 from Trypanosoma brucei brucei.